Reading from the N-terminus, the 310-residue chain is Proline iminopeptidase (310 aa).

The region spanning 33–290 (PVIFLHGGPG…RVVQAGHCAF (258 aa)) is the AB hydrolase-1 domain. Residue Ser107 is the Nucleophile of the active site. Asp260 is a catalytic residue. The Proton donor role is filled by His287.

This sequence belongs to the peptidase S33 family.

It localises to the cytoplasm. The enzyme catalyses Release of N-terminal proline from a peptide.. Hydrolyzes peptides having the structure Pro-Y-Z to yield free proline. Also hydrolyzes the dipeptide Pro-Gly. This Neisseria gonorrhoeae protein is Proline iminopeptidase (pip).